The sequence spans 200 residues: MKAVVFAMVMAVSFNVFASGDESDKQALQSLLKQTQSLSAEFEQQVKDEQGEVLQTLSGTLKLKRPANLYWHTKEPDESVMVANGKKVWYYNPFVEQVTIYAQQDMVDDSPLLLVLNSNGNQWQNYNVSFRDNRYFVEHQTNGSKLELRFTDEKLTEITMVQAQGERTELMLNNVALNETISDEQFVFDVPADVDVDDQS.

An N-terminal signal peptide occupies residues 1–18; sequence MKAVVFAMVMAVSFNVFA.

This sequence belongs to the LolA family. In terms of assembly, monomer.

The protein localises to the periplasm. Its function is as follows. Participates in the translocation of lipoproteins from the inner membrane to the outer membrane. Only forms a complex with a lipoprotein if the residue after the N-terminal Cys is not an aspartate (The Asp acts as a targeting signal to indicate that the lipoprotein should stay in the inner membrane). This is Outer-membrane lipoprotein carrier protein from Idiomarina loihiensis (strain ATCC BAA-735 / DSM 15497 / L2-TR).